The chain runs to 251 residues: Cobalt transport protein CbiM (251 aa).

An N-terminal signal peptide occupies residues 1–27 (MNKKKNTILIGLYFLVGIMLFPDRIYA). Helical transmembrane passes span 35–55 (LPVK…ALGI), 66–86 (GPGI…LSSL), 103–123 (LGAI…VLIF), 131–151 (GGLT…PFVA), 166–186 (WLSV…TTAT), and 208–228 (VFAT…VLIF).

This sequence belongs to the CbiM family. Forms an energy-coupling factor (ECF) transporter complex composed of an ATP-binding protein (A component, CbiO), a transmembrane protein (T component, CbiQ) and 2 possible substrate-capture proteins (S components, CbiM and CbiN) of unknown stoichimetry.

The protein localises to the cell membrane. Its pathway is cofactor biosynthesis; adenosylcobalamin biosynthesis. In terms of biological role, part of the energy-coupling factor (ECF) transporter complex CbiMNOQ involved in cobalt import. This is Cobalt transport protein CbiM from Acetohalobium arabaticum (strain ATCC 49924 / DSM 5501 / Z-7288).